The sequence spans 740 residues: Ethylene receptor 1 (740 aa).

3 helical membrane passes run 23–43 (ISDF…IYFV), 53–73 (WVLV…LINL), and 95–115 (AAVS…LLSV). Cu cation-binding residues include cysteine 65 and histidine 69. Positions 158–307 (DRHTILKTTL…VVADQVAVAL (150 aa)) constitute a GAF domain. A Histidine kinase domain is found at 350–587 (VMNHEMRTPM…TVTFVVKLGI (238 aa)). Histidine 353 carries the phosphohistidine; by autocatalysis modification. A Response regulatory domain is found at 615–732 (KVLLMDENGI…KMRNVLSKLL (118 aa)). Residue aspartate 663 is modified to 4-aspartylphosphate.

It belongs to the ethylene receptor family. In terms of assembly, homodimer; disulfide-linked. Cu cation serves as cofactor. Post-translationally, activation probably requires a transfer of a phosphate group between a His in the transmitter domain and an Asp of the receiver domain.

The protein resides in the endoplasmic reticulum membrane. It catalyses the reaction ATP + protein L-histidine = ADP + protein N-phospho-L-histidine.. May act early in the ethylene signal transduction pathway, possibly as an ethylene receptor, or as a regulator of the pathway. This Pelargonium hortorum (Common geranium) protein is Ethylene receptor 1 (ETR1).